Consider the following 926-residue polypeptide: Isoleucine--tRNA ligase (926 aa).

A 'HIGH' region motif is present at residues Pro-57–His-67. Glu-555 is an L-isoleucyl-5'-AMP binding site. A 'KMSKS' region motif is present at residues Lys-596 to Ser-600. Lys-599 provides a ligand contact to ATP. 4 residues coordinate Zn(2+): Cys-897, Cys-900, Cys-914, and Cys-917.

Belongs to the class-I aminoacyl-tRNA synthetase family. IleS type 1 subfamily. As to quaternary structure, monomer. It depends on Zn(2+) as a cofactor.

The protein resides in the cytoplasm. The enzyme catalyses tRNA(Ile) + L-isoleucine + ATP = L-isoleucyl-tRNA(Ile) + AMP + diphosphate. Its function is as follows. Catalyzes the attachment of isoleucine to tRNA(Ile). As IleRS can inadvertently accommodate and process structurally similar amino acids such as valine, to avoid such errors it has two additional distinct tRNA(Ile)-dependent editing activities. One activity is designated as 'pretransfer' editing and involves the hydrolysis of activated Val-AMP. The other activity is designated 'posttransfer' editing and involves deacylation of mischarged Val-tRNA(Ile). This chain is Isoleucine--tRNA ligase, found in Natranaerobius thermophilus (strain ATCC BAA-1301 / DSM 18059 / JW/NM-WN-LF).